The primary structure comprises 229 residues: Prolactin (229 aa).

Positions Met1–Ser30 are cleaved as a signal peptide. Disulfide bonds link Cys34–Cys41, Cys88–Cys204, and Cys221–Cys229.

This sequence belongs to the somatotropin/prolactin family.

The protein resides in the secreted. In Gallus gallus (Chicken), this protein is Prolactin (PRL).